A 324-amino-acid chain; its full sequence is Alkanal monooxygenase beta chain (324 aa).

Belongs to the bacterial luciferase oxidoreductase family. In terms of assembly, heterodimer of an alpha and a beta chain.

It catalyses the reaction a long-chain fatty aldehyde + FMNH2 + O2 = a long-chain fatty acid + hnu + FMN + H2O + 2 H(+). Its function is as follows. Light-emitting reaction in luminous bacteria. The specific role of the beta subunit is unknown, but it is absolutely required for bioluminescence activity. This is Alkanal monooxygenase beta chain (luxB) from Photorhabdus luminescens (Xenorhabdus luminescens).